Consider the following 612-residue polypeptide: uncharacterized protein (612 aa).

5 disordered regions span residues 46 to 113, 129 to 185, 313 to 360, 457 to 488, and 593 to 612; these read QQPQ…MVTP, QQYQ…TPTY, TKDG…GSTM, FSIS…SGYG, and NNTN…VVTI. Residues 58-102 show a composition bias toward low complexity; the sequence is HQQIPISTQSTPNSTSSTTTTTTTTTSTTTAPTSNSKKSKTTPSN. Polar residues-rich tracts occupy residues 103–113 and 129–138; these read GNKPTSGMVTP and QQYQPNSQLQ. The span at 143–169 shows a compositional bias: low complexity; that stretch reads IIKKSSLSTTPNNINNNNNNNNNTNTI. The segment covering 175–185 has biased composition (polar residues); it reads GGNNSAPTPTY. Residues 323-359 are compositionally biased toward low complexity; that stretch reads TTSSTSTSSSATSTTSSSTSSTTTTSSTSNSSTPGST.

This is an uncharacterized protein from Dictyostelium discoideum (Social amoeba).